The sequence spans 186 residues: Putative manganese efflux pump MntP (186 aa).

Transmembrane regions (helical) follow at residues 1 to 21, 41 to 61, 71 to 91, 105 to 125, 130 to 150, and 165 to 185; these read MSFL…FAVS, VFFG…GSAV, WIAF…ALYG, LLML…SFAF, ILEP…CGAV, and IIGG…HLLW.

Belongs to the MntP (TC 9.B.29) family.

It is found in the cell membrane. Probably functions as a manganese efflux pump. In Methanosarcina barkeri (strain Fusaro / DSM 804), this protein is Putative manganese efflux pump MntP.